A 291-amino-acid polypeptide reads, in one-letter code: RPE-retinal G protein-coupled receptor (291 aa).

At 1 to 15 the chain is on the extracellular side; that stretch reads MAATRALPAGLGELE. Residues 16-36 form a helical membrane-spanning segment; the sequence is VLAVGTVLLMEALSGISLNGL. The Cytoplasmic portion of the chain corresponds to 37 to 52; that stretch reads TIFSFCKTPDLRTPSN. A helical transmembrane segment spans residues 53 to 73; the sequence is LLVLSLALADTGISLNALVAA. Topologically, residues 74-91 are extracellular; that stretch reads VSSLLRRWPHGSEGCQVH. Residues Cys-88 and Cys-162 are joined by a disulfide bond. A helical transmembrane segment spans residues 92 to 112; the sequence is GFQGFATALASICGSAAVAWG. At 113–130 the chain is on the cytoplasmic side; that stretch reads RYHHYCTRRQLAWDTAIP. The chain crosses the membrane as a helical span at residues 131–151; it reads LVLFVWMSSAFWASLPLMGWG. The Extracellular portion of the chain corresponds to 152–175; that stretch reads HYDYEPVGTCCTLDYSRGDRNFIS. Residues 176 to 196 form a helical membrane-spanning segment; that stretch reads FLFTMAFFNFLVPLFITHTSY. Residues 197–219 lie on the Cytoplasmic side of the membrane; that stretch reads RFMEQKFSRSGHLPVNTTLPGRM. The helical transmembrane segment at 220–240 threads the bilayer; sequence LLLGWGPYALLYLYAAIADVS. The Extracellular segment spans residues 241–247; that stretch reads FISPKLQ. The helical transmembrane segment at 248 to 268 threads the bilayer; the sequence is MVPALIAKTMPTINAINYALH. An N6-(retinylidene)lysine modification is found at Lys-255. The Cytoplasmic segment spans residues 269 to 291; sequence REMVCRGTWQCLSPQKSKKDRTQ.

This sequence belongs to the G-protein coupled receptor 1 family. Opsin subfamily. In terms of processing, covalently binds all-trans- and 11-cis-retinal.

It is found in the membrane. Its function is as follows. Receptor for all-trans- and 11-cis-retinal. Binds preferentially to the former and may catalyze the isomerization of the chromophore by a retinochrome-like mechanism. The chain is RPE-retinal G protein-coupled receptor (Rgr) from Mus musculus (Mouse).